The sequence spans 353 residues: UPF0283 membrane protein YcjF (353 aa).

The next 3 membrane-spanning stretches (helical) occupy residues 70–90 (MVMG…VQWT), 100–120 (VALG…GSVV), and 213–233 (ESTL…FIAW).

The protein belongs to the UPF0283 family.

The protein localises to the cell inner membrane. The polypeptide is UPF0283 membrane protein YcjF (Escherichia coli O127:H6 (strain E2348/69 / EPEC)).